A 132-amino-acid polypeptide reads, in one-letter code: Small ribosomal subunit protein uS8 (132 aa).

It belongs to the universal ribosomal protein uS8 family. In terms of assembly, part of the 30S ribosomal subunit. Contacts proteins S5 and S12.

Functionally, one of the primary rRNA binding proteins, it binds directly to 16S rRNA central domain where it helps coordinate assembly of the platform of the 30S subunit. The chain is Small ribosomal subunit protein uS8 from Streptococcus sanguinis (strain SK36).